The following is a 112-amino-acid chain: MHEFSLCQSVISIAKKAAENNSKKVSKIVVKIGNLAGVDIESFEFWFPVAAKDSVLEQAKLEIIHEQAIAKCKACEHEFELTRLYEQCPNCGSFEKDILKGKDMLVESIVFN.

His-2 lines the Ni(2+) pocket. Zn(2+) is bound by residues Cys-72, Cys-75, Cys-88, and Cys-91.

This sequence belongs to the HypA/HybF family.

Its function is as follows. Involved in the maturation of [NiFe] hydrogenases. Required for nickel insertion into the metal center of the hydrogenase. This Francisella philomiragia subsp. philomiragia (strain ATCC 25017 / CCUG 19701 / FSC 153 / O#319-036) protein is Hydrogenase maturation factor HypA.